A 320-amino-acid polypeptide reads, in one-letter code: Retron Ec86 reverse transcriptase (320 aa).

A Reverse transcriptase domain is found at 34–248 (VETLRLLIYT…SQRKVTGLVI (215 aa)). Residues Asp-119, Asp-197, and Asp-198 each contribute to the Mg(2+) site. Residues 230–320 (KKTCISGPRS…GKNPLNKAKT (91 aa)) are necessary and required for recognition and binding of RNA.

The protein belongs to the bacterial reverse transcriptase family.

It carries out the reaction DNA(n) + a 2'-deoxyribonucleoside 5'-triphosphate = DNA(n+1) + diphosphate. Reverse transcriptase (RT) component of antiviral defense system retron Ec86, composed of a non-coding RNA (ncRNA), a ribosyltransferase/DNA-binding protein and this RT. Expression of the 3-gene retron confers protection against bacteriophage T5. At multiplicity of infection (MOI) of 0.02 cultures grow normally when infected with T5 without collapsing, at MOI 2 cultures enter growth stasis. Responsible for synthesis of msDNA (a branched molecule with RNA linked by a 2',5'-phosphodiester bond to ssDNA). The retron transcript serves as primer (from a conserved internal G residue) and template for the reaction, and codes for the RT. Recognizes only its cognate RNA as a primer template. Overexpression of the ncRNA and RT (without the ribosyltransferase), which leads to increased levels of msDNA, is mutagenic in vivo. This may be due to a mismatch in the msDNA stem which binds and sequesters MutS and/or MutL. In Escherichia coli, this protein is Retron Ec86 reverse transcriptase.